The sequence spans 282 residues: Transmembrane protein 41B (282 aa).

The interval 1–36 is disordered; it reads MAKKRAGNRETESSPLVEQEPRPSKETPVPKGAQSP. Helical transmembrane passes span 43 to 63, 102 to 122, 138 to 160, 188 to 208, 216 to 236, and 251 to 271; these read MSILLLVVIFACSACVMYLVF, TQVLLAYFATYIFLQTFAIPG, LALFLVCLCSGLGASFCYMLSYL, LINYIIFLRITPFLPNWFINI, PLGVFFLGTFLGVAPPSFVAI, and AVSWNSLLVLGVLAVVSILPV. The tract at residues 131–242 is VTT domain; required for its function in autophagy; sequence GYLYPFPLAL…FVAINAGTTL (112 aa).

The protein belongs to the TMEM41 family.

The protein resides in the endoplasmic reticulum membrane. Its subcellular location is the endomembrane system. The enzyme catalyses a 1,2-diacyl-sn-glycero-3-phospho-L-serine(in) = a 1,2-diacyl-sn-glycero-3-phospho-L-serine(out). It catalyses the reaction cholesterol(in) = cholesterol(out). The catalysed reaction is a 1,2-diacyl-sn-glycero-3-phosphocholine(in) = a 1,2-diacyl-sn-glycero-3-phosphocholine(out). It carries out the reaction a 1,2-diacyl-sn-glycero-3-phosphoethanolamine(in) = a 1,2-diacyl-sn-glycero-3-phosphoethanolamine(out). Phospholipid scramblase involved in lipid homeostasis and membrane dynamics processes. Has phospholipid scramblase activity toward cholesterol and phosphatidylserine, as well as phosphatidylethanolamine and phosphatidylcholine. Required for autophagosome formation: participates in early stages of autophagosome biogenesis at the endoplasmic reticulum (ER) membrane by reequilibrating the leaflets of the ER as lipids are extracted by atg2 (atg2a or atg2b) to mediate autophagosome assembly. In addition to autophagy, involved in other processes in which phospholipid scramblase activity is required. Required for normal motor neuron development. The protein is Transmembrane protein 41B of Danio rerio (Zebrafish).